A 407-amino-acid polypeptide reads, in one-letter code: PWWP domain-containing protein 3 (407 aa).

The disordered stretch occupies residues 1–46 (MMVARTRSQKRKLEEINNQKKIKTKKKATGQQTSNTKNLRDVKKKG). A PWWP domain is found at 63–129 (NGEYVLAKMS…SSNVLPLTVD (67 aa)). Phosphoserine occurs at positions 160 and 162. Residues 163-248 (DVEEDEFEPE…PIPSPKKTAK (86 aa)) form a disordered region. A compositionally biased stretch (basic and acidic residues) spans 172–208 (ENTRKKLQKPIEKPKKEKIEATPKIDGGKRLKNEKSS). Phosphoserine is present on residues S236, S238, and S242.

Component of the mst2 complex composed of at least eaf6, mst2, nto1, pdp3, ptf1, ptf2 and tfg3.

Its subcellular location is the nucleus. In terms of biological role, component of the mst2 complex which is a highly specific H3 lysine 14 (H3K14) acetyltransferase that functions together with gcn5 to regulate global levels of H3K14 acetylation (H3K14ac), critical for DNA damage checkpoint activation. This chain is PWWP domain-containing protein 3 (pdp3), found in Schizosaccharomyces pombe (strain 972 / ATCC 24843) (Fission yeast).